A 105-amino-acid chain; its full sequence is UPF0235 protein A1G_07140 (105 aa).

Belongs to the UPF0235 family.

This Rickettsia rickettsii (strain Sheila Smith) protein is UPF0235 protein A1G_07140.